We begin with the raw amino-acid sequence, 117 residues long: MPRVKRGFKARQRRNKVLKLAKGYRGARSKLFRSATEAVDRALNYAFRDRRVKKRDFRALWITRINAAARINGLSYSKLIHGLKLANVEIDRKVMADLAVSDPNGFAAIAAAAKAKF.

Belongs to the bacterial ribosomal protein bL20 family.

Its function is as follows. Binds directly to 23S ribosomal RNA and is necessary for the in vitro assembly process of the 50S ribosomal subunit. It is not involved in the protein synthesizing functions of that subunit. The protein is Large ribosomal subunit protein bL20 of Citrifermentans bemidjiense (strain ATCC BAA-1014 / DSM 16622 / JCM 12645 / Bem) (Geobacter bemidjiensis).